The chain runs to 273 residues: MSYLLDPSRKTVTITRLQAMRDAGEKIAMLTAYDSSFAALLDYCGVEVILVGDSLGNVMQGQQTTLPVTLEHMAYHTECVARANQTALLVTDLPFGTYGTPEMAFASAVTLMRAGAHMVKLEGGDWLAPTVKFLVERSIPVCAHIGLTPQSVHAFGGFKVQGKTDEGAAQLRRDAQAMEAAGAQIVLMEAVPATLAGEITQMLKVPTIGIGAGADCSGQVLVLQDMINVYPGRKAKFVRNFMDGQTTIEGAIRAYVAAVKDGSFPAAEHTFSA.

2 residues coordinate Mg(2+): aspartate 53 and aspartate 92. 3-methyl-2-oxobutanoate contacts are provided by residues 53–54 (DS), aspartate 92, and lysine 120. Glutamate 122 lines the Mg(2+) pocket. Catalysis depends on glutamate 189, which acts as the Proton acceptor.

Belongs to the PanB family. In terms of assembly, homodecamer; pentamer of dimers. The cofactor is Mg(2+).

The protein resides in the cytoplasm. It carries out the reaction 3-methyl-2-oxobutanoate + (6R)-5,10-methylene-5,6,7,8-tetrahydrofolate + H2O = 2-dehydropantoate + (6S)-5,6,7,8-tetrahydrofolate. Its pathway is cofactor biosynthesis; (R)-pantothenate biosynthesis; (R)-pantoate from 3-methyl-2-oxobutanoate: step 1/2. In terms of biological role, catalyzes the reversible reaction in which hydroxymethyl group from 5,10-methylenetetrahydrofolate is transferred onto alpha-ketoisovalerate to form ketopantoate. The sequence is that of 3-methyl-2-oxobutanoate hydroxymethyltransferase from Cupriavidus pinatubonensis (strain JMP 134 / LMG 1197) (Cupriavidus necator (strain JMP 134)).